The following is a 693-amino-acid chain: Probable L-type lectin-domain containing receptor kinase VI.1 (693 aa).

The first 22 residues, 1–22 (MGIARSINSFMFFFFLMILSNA), serve as a signal peptide directing secretion. Asn21, Asn44, Asn71, Asn89, Asn141, Asn180, and Asn223 each carry an N-linked (GlcNAc...) asparagine glycan. Topologically, residues 23–311 (SKSSVLAEAT…SNKKGYNSQV (289 aa)) are extracellular. Residues 33-279 (TAKFTFIGFK…AHYVMGWSFS (247 aa)) form a legume-lectin like region. Residues 312–332 (IVLIVALSIVTLVLLVLLFIF) traverse the membrane as a helical segment. At 333–693 (VMYKRRIQEE…VSSSSIVSGR (361 aa)) the chain is on the cytoplasmic side. The Protein kinase domain maps to 368-642 (FKESEIIGTG…LRYLNGEENV (275 aa)). ATP contacts are provided by residues 374–382 (IGTGGFGIV) and Lys396. Asp495 serves as the catalytic Proton acceptor. The tract at residues 670–693 (DRASSSNTFSSFSNVSSSSIVSGR) is disordered.

The protein in the C-terminal section; belongs to the protein kinase superfamily. Ser/Thr protein kinase family. In the N-terminal section; belongs to the leguminous lectin family.

The protein localises to the cell membrane. It carries out the reaction L-seryl-[protein] + ATP = O-phospho-L-seryl-[protein] + ADP + H(+). The catalysed reaction is L-threonyl-[protein] + ATP = O-phospho-L-threonyl-[protein] + ADP + H(+). The sequence is that of Probable L-type lectin-domain containing receptor kinase VI.1 (LECRK61) from Arabidopsis thaliana (Mouse-ear cress).